Reading from the N-terminus, the 480-residue chain is ATP synthase subunit beta (480 aa).

G152–T159 is a binding site for ATP.

Belongs to the ATPase alpha/beta chains family. In terms of assembly, F-type ATPases have 2 components, CF(1) - the catalytic core - and CF(0) - the membrane proton channel. CF(1) has five subunits: alpha(3), beta(3), gamma(1), delta(1), epsilon(1). CF(0) has three main subunits: a(1), b(2) and c(9-12). The alpha and beta chains form an alternating ring which encloses part of the gamma chain. CF(1) is attached to CF(0) by a central stalk formed by the gamma and epsilon chains, while a peripheral stalk is formed by the delta and b chains.

It localises to the cell membrane. The enzyme catalyses ATP + H2O + 4 H(+)(in) = ADP + phosphate + 5 H(+)(out). Produces ATP from ADP in the presence of a proton gradient across the membrane. The catalytic sites are hosted primarily by the beta subunits. This is ATP synthase subunit beta from Wolbachia sp. subsp. Brugia malayi (strain TRS).